The primary structure comprises 358 residues: Acyl-CoA desaturase 1 (358 aa).

Topologically, residues 1 to 71 (MPAHMLQEIS…EGPPPKLEYV (71 aa)) are cytoplasmic. Residues 8–24 (EISSSYTTTTTITEPPS) are compositionally biased toward low complexity. A disordered region spans residues 8–33 (EISSSYTTTTTITEPPSGNLQNGREK). The helical transmembrane segment at 72-92 (WRNIILMALLHVGALYGITLI) threads the bilayer. Substrate is bound at residue asparagine 74. Over 93-96 (PSSK) the chain is Lumenal. The helical transmembrane segment at 97 to 117 (VYTLLWGIFYYLISALGITAG) threads the bilayer. Residues 118–216 (AHRLWSHRTY…EKLVMFQRRY (99 aa)) lie on the Cytoplasmic side of the membrane. 2 residues coordinate Fe cation: histidine 119 and histidine 124. Residues 119–124 (HRLWSH) carry the Histidine box-1 motif. 3 residues coordinate substrate: asparagine 147, arginine 154, and aspartate 155. Fe cation is bound by residues histidine 156, histidine 159, and histidine 160. Residues 156–160 (HRAHH) carry the Histidine box-2 motif. Positions 187 and 188 each coordinate substrate. A helical membrane pass occupies residues 217 to 236 (YKPGLLLMCFILPTLVPWYC). At 237–240 (WGET) the chain is on the lumenal side. Residues 241 to 262 (FLHSLFVSTFLRYTLVLNATWL) traverse the membrane as a helical segment. Residue tryptophan 261 participates in substrate binding. Residues 263–358 (VNSAAHLYGY…RTGDGSHKSS (96 aa)) lie on the Cytoplasmic side of the membrane. Fe cation contacts are provided by histidine 268, histidine 297, histidine 300, and histidine 301. A Histidine box-3 motif is present at residues 297–301 (HNYHH).

Belongs to the fatty acid desaturase type 1 family. Fe(2+) serves as cofactor. In terms of tissue distribution, detected in liver (at protein level). Detected in adipose tissue. Detected in liver when rats are kept on a fat-free diet, but not when their food contains unsaturated fatty acids.

The protein resides in the endoplasmic reticulum membrane. It localises to the membrane. The catalysed reaction is octadecanoyl-CoA + 2 Fe(II)-[cytochrome b5] + O2 + 2 H(+) = (9Z)-octadecenoyl-CoA + 2 Fe(III)-[cytochrome b5] + 2 H2O. In terms of biological role, stearoyl-CoA desaturase that utilizes O(2) and electrons from reduced cytochrome b5 to introduce the first double bond into saturated fatty acyl-CoA substrates. Catalyzes the insertion of a cis double bond at the Delta-9 position into fatty acyl-CoA substrates including palmitoyl-CoA and stearoyl-CoA. Gives rise to a mixture of 16:1 and 18:1 unsaturated fatty acids. Plays an important role in lipid biosynthesis. Plays an important role in regulating the expression of genes that are involved in lipogenesis and in regulating mitochondrial fatty acid oxidation. Plays an important role in body energy homeostasis. Contributes to the biosynthesis of membrane phospholipids, cholesterol esters and triglycerides. Required for normal development of sebaceous glands. Required for the biosynthesis of normal levels of Delta-9 unsaturated fatty acids and 1-alkyl-2,3-diacylglycerol in the Harderian gland. Required for normal production of meibum, an oily material that prevents drying of the cornea. The protein is Acyl-CoA desaturase 1 (Scd1) of Rattus norvegicus (Rat).